Consider the following 361-residue polypeptide: MDKVMAQLESLVAHYEELQEMMADPEVINDTKRYMEISKEEADLREVVQKYKKYKENKKEIEDNKEIISNETDSDLIEMAKEENAELEKEIPELEDQIKILMLPKDPNDDKDIIMEIRGAAGGDEASLFAGDLLRMYEKYAERQNWNVSMIDSEPTEVGGYKRVAIMITGDKVYSKLKYENGAHRVQRIPVTESQGRVHTSTATVAVMPEYEQVDIDIDPKDIRVDVYRSSGAGGQHINKTSSAVRMTHLPTGIVVAMQDQRSQQQNREKAMQILKSRVYDYYESQNQAQYDAKRKNAVGTGDRSERIRTYNYPQNRVTDHRIGLTLNKLDRVMNGELDEIIDALILYNQTKQLEELADNA.

Q236 carries the N5-methylglutamine modification.

The protein belongs to the prokaryotic/mitochondrial release factor family. Post-translationally, methylated by PrmC. Methylation increases the termination efficiency of RF1.

The protein resides in the cytoplasm. In terms of biological role, peptide chain release factor 1 directs the termination of translation in response to the peptide chain termination codons UAG and UAA. The sequence is that of Peptide chain release factor 1 from Lactobacillus acidophilus (strain ATCC 700396 / NCK56 / N2 / NCFM).